The sequence spans 39 residues: Potassium channel toxin alpha-KTx 2.1 (39 aa).

Disulfide bonds link Cys7/Cys29, Cys13/Cys34, and Cys17/Cys36. The segment at Gly26–Cys34 is interaction with Ca(2+)-activated K(+) channels. Position 39 is an asparagine amide (Asn39).

This sequence belongs to the short scorpion toxin superfamily. Potassium channel inhibitor family. Alpha-KTx 02 subfamily. As to expression, expressed by the venom gland.

It localises to the secreted. Its function is as follows. Blocks voltage-gated potassium channels (mKv1.1/KCNA1 (Kd&gt;25 nM), rKv1.2/KCNA2 (Kd=2 nM), mKv1.3/KCNA3 (Kd=1 nM), hKv1.5/KCNA5 (Kd&gt;25 nM) and mKv3.1/KCNC1 (Kd&gt;25 nM)) and calcium-activated potassium channels (KCa1.1/KCNMA1 and KCa3.1/KCNN4, Kd&gt;25 nM). The chain is Potassium channel toxin alpha-KTx 2.1 from Centruroides noxius (Mexican scorpion).